A 276-amino-acid polypeptide reads, in one-letter code: Casein kinase II subunit beta-3 (276 aa).

2 disordered regions span residues M1 to A22 and K34 to D86.

Belongs to the casein kinase 2 subunit beta family. In terms of assembly, heterotetramer of two catalytic alpha subunits and two regulatory beta subunits. Interacts with CCA1. Interacts with LHY. In terms of processing, phosphorylated by alpha subunit.

It is found in the cytoplasm. The protein resides in the cytosol. It localises to the nucleus. Plays a complex role in regulating the basal catalytic activity of the alpha subunit. The tetrameric holoenzyme CK2, composed of two alpha and two beta subunits, phosphorylates the transcription factor PIF1 after an exposure to light, resulting in a proteasome-dependent degradation of PIF1 and promotion of photomorphogenesis. CK2 phosphorylates translation initiation factors. May participate in the regulation of the initiation of translation. Stimulates the binding of CCA1 to promoters. This is Casein kinase II subunit beta-3 (CKB3) from Arabidopsis thaliana (Mouse-ear cress).